The sequence spans 602 residues: PEX5-related protein (602 aa).

Disordered regions lie at residues 94–140 and 167–206; these read VSQT…PETS and HLMA…LNSE. Residues Ser-181, Ser-229, Ser-233, and Ser-237 each carry the phosphoserine modification. TPR repeat units lie at residues 302 to 335, 336 to 369, and 371 to 403; these read WPGA…DPGN, AEAW…QPNN, and KALM…NPKY. A phosphoserine mark is found at Ser-421 and Ser-423. 3 TPR repeats span residues 450–483, 485–517, and 519–551; these read PDLQ…RPED, SLWN…QPGF, and RSRY…QRKS.

The protein belongs to the peroxisomal targeting signal receptor family. In terms of assembly, forms an obligate 4:4 complex with HCN2. Interacts with RAB8B. Interacts with HCN3. Interacts with HCN4 with a 4:4 HCN4:PEX5L stoichiometry; reduces the effects of cAMP on the voltage-dependence and rate of activation of HCN4. Brain specific.

Its subcellular location is the cytoplasm. The protein resides in the membrane. Accessory subunit of hyperpolarization-activated cyclic nucleotide-gated (HCN) channels, regulating their cell-surface expression and cyclic nucleotide dependence. The chain is PEX5-related protein (Pex5l) from Rattus norvegicus (Rat).